A 73-amino-acid polypeptide reads, in one-letter code: Large ribosomal subunit protein bL31 (73 aa).

The protein belongs to the bacterial ribosomal protein bL31 family. Type A subfamily. As to quaternary structure, part of the 50S ribosomal subunit.

Functionally, binds the 23S rRNA. This Bartonella tribocorum (strain CIP 105476 / IBS 506) protein is Large ribosomal subunit protein bL31.